Reading from the N-terminus, the 124-residue chain is U13-hexatoxin-Mg1a (124 aa).

An N-terminal signal peptide occupies residues 1 to 17 (MKLSALVFVASVMLVAA). The propeptide occupies 18 to 52 (SPVKDVEEPVETHLAADLKTIEELAKYEEAAVQKR). 4 cysteine pairs are disulfide-bonded: C54–C72, C65–C78, C69–C116, and C71–C87.

Expressed by the venom gland.

It localises to the secreted. No toxicity is observed upon intracranial injection into mice and intrathorax injection into crickets. In Macrothele gigas (Japanese funnel web spider), this protein is U13-hexatoxin-Mg1a.